The chain runs to 230 residues: Ureidoacrylate amidohydrolase RutB (230 aa).

The active-site Proton acceptor is the aspartate 23. The active site involves lysine 132. The active-site Nucleophile is cysteine 165.

This sequence belongs to the isochorismatase family. RutB subfamily.

It catalyses the reaction (Z)-3-ureidoacrylate + H2O + H(+) = (Z)-3-aminoacrylate + NH4(+) + CO2. The enzyme catalyses (Z)-3-ureidoacrylate + H2O = (Z)-3-aminoacrylate + carbamate + H(+). It carries out the reaction (Z)-2-methylureidoacrylate + H2O + H(+) = (Z)-2-methylaminoacrylate + NH4(+) + CO2. In terms of biological role, hydrolyzes ureidoacrylate to form aminoacrylate and carbamate. The carbamate hydrolyzes spontaneously, thereby releasing one of the nitrogen atoms of the pyrimidine ring as ammonia and one of its carbon atoms as CO2. The polypeptide is Ureidoacrylate amidohydrolase RutB (Yersinia enterocolitica serotype O:8 / biotype 1B (strain NCTC 13174 / 8081)).